Here is a 321-residue protein sequence, read N- to C-terminus: Cytochrome c biogenesis protein CcsA (321 aa).

Helical transmembrane passes span 9 to 29 (ILTH…LMTL), 44 to 64 (GIIS…IYSG), 71 to 91 (LYES…IPYL), 98 to 118 (LSVI…SCLS), 143 to 163 (MLLS…LLVI), 225 to 245 (IISL…VWAN), 260 to 280 (WAFI…NINF), and 288 to 308 (VASI…LLGI).

This sequence belongs to the CcmF/CycK/Ccl1/NrfE/CcsA family. As to quaternary structure, may interact with Ccs1.

Its subcellular location is the plastid. The protein resides in the chloroplast thylakoid membrane. Functionally, required during biogenesis of c-type cytochromes (cytochrome c6 and cytochrome f) at the step of heme attachment. The protein is Cytochrome c biogenesis protein CcsA of Dioscorea elephantipes (Elephant's foot yam).